Here is a 382-residue protein sequence, read N- to C-terminus: Alanine racemase 1 (382 aa).

K39 serves as the catalytic Proton acceptor; specific for D-alanine. K39 is subject to N6-(pyridoxal phosphate)lysine. R138 is a binding site for substrate. Y265 serves as the catalytic Proton acceptor; specific for L-alanine. Position 312 (M312) interacts with substrate.

The protein belongs to the alanine racemase family. The cofactor is pyridoxal 5'-phosphate.

It catalyses the reaction L-alanine = D-alanine. Its pathway is amino-acid biosynthesis; D-alanine biosynthesis; D-alanine from L-alanine: step 1/1. Catalyzes the interconversion of L-alanine and D-alanine. May also act on other amino acids. In Staphylococcus aureus (strain N315), this protein is Alanine racemase 1 (alr1).